A 326-amino-acid polypeptide reads, in one-letter code: GTP 3',8-cyclase (326 aa).

Residues 7–232 (GFGRSFPYLR…PRAADAGPAR (226 aa)) form the Radical SAM core domain. Residue R16 participates in GTP binding. The [4Fe-4S] cluster site is built by C23 and C27. Y29 contributes to the S-adenosyl-L-methionine binding site. Residue C30 coordinates [4Fe-4S] cluster. Position 65 (R65) interacts with GTP. G69 is an S-adenosyl-L-methionine binding site. T96 is a binding site for GTP. Residue S120 participates in S-adenosyl-L-methionine binding. Position 157 (K157) interacts with GTP. M191 serves as a coordination point for S-adenosyl-L-methionine. Residues C254 and C257 each coordinate [4Fe-4S] cluster. 259-261 (RLR) lines the GTP pocket. C271 is a [4Fe-4S] cluster binding site.

The protein belongs to the radical SAM superfamily. MoaA family. Monomer and homodimer. [4Fe-4S] cluster serves as cofactor.

The catalysed reaction is GTP + AH2 + S-adenosyl-L-methionine = (8S)-3',8-cyclo-7,8-dihydroguanosine 5'-triphosphate + 5'-deoxyadenosine + L-methionine + A + H(+). Its pathway is cofactor biosynthesis; molybdopterin biosynthesis. Functionally, catalyzes the cyclization of GTP to (8S)-3',8-cyclo-7,8-dihydroguanosine 5'-triphosphate. This is GTP 3',8-cyclase from Stenotrophomonas maltophilia (strain K279a).